Reading from the N-terminus, the 245-residue chain is Deoxyadenosine kinase (245 aa).

An ATP-binding site is contributed by Gly-28 to Thr-36. Residues Glu-52, Tyr-64, and Gln-75 each coordinate substrate. Residue Asp-99 is the Proton acceptor of the active site. Substrate-binding residues include Arg-100, Asp-105, and Glu-165.

The protein belongs to the DCK/DGK family.

It catalyses the reaction 2'-deoxyadenosine + ATP = dAMP + ADP + H(+). In terms of biological role, specific kinase that phosphorylates deoxyadenosine but not any other deoxyribonucleoside, as part of the deoxyribonucleotide salvage pathway. The chain is Deoxyadenosine kinase (dak) from Dictyostelium discoideum (Social amoeba).